We begin with the raw amino-acid sequence, 369 residues long: Cytokine receptor common subunit gamma (369 aa).

The first 22 residues, 1 to 22 (MLKPSLPFTSLLFLQLPLLGVG), serve as a signal peptide directing secretion. The Extracellular portion of the chain corresponds to 23-262 (LNTTILTPNG…ENPFLFALEA (240 aa)). Asn-24, Asn-71, Asn-75, and Asn-84 each carry an N-linked (GlcNAc...) asparagine glycan. Cys-62 and Cys-72 form a disulfide bridge. A disulfide bond links Cys-102 and Cys-115. The region spanning 156–253 (APENLTLHKL…IHWGSNTSKE (98 aa)) is the Fibronectin type-III domain. Asn-159 carries N-linked (GlcNAc...) asparagine glycosylation. Cys-182 and Cys-231 are oxidised to a cystine. Residues 237–241 (WSEWS) carry the WSXWS motif motif. N-linked (GlcNAc...) asparagine glycosylation occurs at Asn-249. Residues 263 to 283 (VVISVGSMGLIISLLCVYFWL) form a helical membrane-spanning segment. The Cytoplasmic portion of the chain corresponds to 284 to 369 (ERTMPRIPTL…PPCYTLKPET (86 aa)). A Box 1 motif motif is present at residues 286–294 (TMPRIPTLK). Thr-292 carries the phosphothreonine modification.

This sequence belongs to the type I cytokine receptor family. Type 5 subfamily. As to quaternary structure, the gamma subunit is common to the IL2, IL4, IL7, IL15, IL21 and probably also the IL13 receptors. Interacts with SHB upon interleukin stimulation. Interacts with IL9. In terms of assembly, (Microbial infection) Interacts with HTLV-1 accessory protein p12I.

The protein resides in the cell membrane. It localises to the cell surface. Common subunit for the receptors for a variety of interleukins. Probably in association with IL15RA, involved in the stimulation of neutrophil phagocytosis by IL15. The protein is Cytokine receptor common subunit gamma (IL2RG) of Homo sapiens (Human).